Reading from the N-terminus, the 145-residue chain is Probable thioredoxin-2 (145 aa).

Positions 39–144 (VFDIDSVEDF…LDDFIEDVLA (106 aa)) constitute a Thioredoxin domain. Catalysis depends on nucleophile residues C68 and C71. C68 and C71 form a disulfide bridge.

It belongs to the thioredoxin family.

In terms of biological role, participates in various redox reactions through the reversible oxidation of its active center dithiol to a disulfide and catalyzes dithiol-disulfide exchange reactions. This is Probable thioredoxin-2 (trx-2) from Caenorhabditis elegans.